A 202-amino-acid polypeptide reads, in one-letter code: MADEYLVPLDQYLAAGVHIGTQQKTKDMKKFIYRVRQDGLYVLDVRKTDERLKVAGKFLARFDPQSILAVSVRLYGQKPVKKFGEVTGARAIPGRFLPGTMTNPAVKNFFEPDVIIITDPRADHQAMKEAIEIGIPIVALVDTENLLSYVDLAIPTNNKGRKALALIYWILAREILYNRGEISSREEFKIPVEEFEMKIVRR.

This sequence belongs to the universal ribosomal protein uS2 family.

This Pyrococcus abyssi (strain GE5 / Orsay) protein is Small ribosomal subunit protein uS2 (rps2).